A 423-amino-acid polypeptide reads, in one-letter code: Cop9 signalosome complex subunit 12 (423 aa).

In terms of domain architecture, PCI spans 232–418 (GFFHLNEALL…RCIVFSKKEP (187 aa)).

Belongs to the CSN12 family. In terms of assembly, component of a COP9 signalosome-like (CSN) complex, composed of RRI1/CSN5, CSN9, RRI2/CSN10, PCI8/CSN11, CSN12 and CSI1. In the complex, it probably interacts directly with RRI1/CSN5, CSN9, RRI2/CSN10 and CSI1. Interacts with SEM1 and THP3.

Its subcellular location is the cytoplasm. It is found in the nucleus. In terms of biological role, component of the COP9 signalosome (CSN) complex that acts as an regulator of the ubiquitin (Ubl) conjugation pathway by mediating the deneddylation of the cullin subunit of SCF-type E3 ubiquitin-protein ligase complexes. The CSN complex is involved in the regulation of the mating pheromone response. CSN12 forms a complex with THP3 that is recruited to transcribed genes and required for transcription elongation. In Saccharomyces cerevisiae (strain ATCC 204508 / S288c) (Baker's yeast), this protein is Cop9 signalosome complex subunit 12 (CSN12).